Here is a 431-residue protein sequence, read N- to C-terminus: UDP-N-acetylmuramate--L-alanine ligase (431 aa).

108–114 (GAHGKST) provides a ligand contact to ATP.

The protein belongs to the MurCDEF family.

It is found in the cytoplasm. It carries out the reaction UDP-N-acetyl-alpha-D-muramate + L-alanine + ATP = UDP-N-acetyl-alpha-D-muramoyl-L-alanine + ADP + phosphate + H(+). The protein operates within cell wall biogenesis; peptidoglycan biosynthesis. In terms of biological role, cell wall formation. The polypeptide is UDP-N-acetylmuramate--L-alanine ligase (Campylobacter jejuni subsp. jejuni serotype O:6 (strain 81116 / NCTC 11828)).